The primary structure comprises 1223 residues: RNA-binding protein 20 (1223 aa).

Disordered stretches follow at residues 1 to 59, 238 to 288, and 306 to 381; these read MVLA…QAGL, QAYG…PTSQ, and GEVG…GARR. Residues 29 to 57 show a composition bias toward pro residues; the sequence is APAPPAPPGPRGMQPPPPPPPPPPPPPQA. 2 stretches are compositionally biased toward polar residues: residues 238–261 and 314–331; these read QAYG…SGSV and GPNS…QSKP. The U1-type zinc finger occupies 410–444; the sequence is HLPHICSICDKKVFDLKDWELHVKGKLHAQKCLLF. An RRM domain is found at 520–595; it reads RVVHICNLPE…EKLLIRMSKR (76 aa). Residues 626–636 are compositionally biased toward basic and acidic residues; it reads EADRYGPERPR. 3 disordered regions span residues 626–902, 971–995, and 1042–1102; these read EADR…TNME, EISL…DVEM, and MSSP…STQE. Residues 630 to 657 form an RS region; sequence YGPERPRSRSPVSRSLSPRSHTPSFTSC. 6 positions are modified to phosphoserine: Ser637, Ser639, Ser642, Ser644, Ser662, and Ser681. The span at 638–662 shows a compositional bias: low complexity; the sequence is RSPVSRSLSPRSHTPSFTSCSSSHS. Composition is skewed to basic and acidic residues over residues 676–711 and 718–737; these read DSWE…MWAH and RQVD…GYRE. Over residues 742-752 the composition is skewed to low complexity; sequence SGSPSSLHSVS. Ser744 bears the Phosphoserine mark. Basic and acidic residues-rich tracts occupy residues 755-774 and 786-852; these read KSRE…DKYL and RKDE…KEEQ. Residues Ser803, Ser861, Ser872, Ser887, Ser889, Ser973, Ser976, and Ser1044 each carry the phosphoserine modification. The segment covering 864–884 has biased composition (basic and acidic residues); sequence RQEKETESSDAENTRTRKEQD. The span at 1083–1102 shows a compositional bias: polar residues; sequence STPTETDLQSQACQGVSTQE. A phosphoserine mark is found at Ser1111 and Ser1116. A Matrin-type zinc finger spans residues 1157–1188; it reads FYCKLCGLFYTSEEMAKMSHCRSAVHYRNLQK. Positions 1197–1223 are disordered; it reads GLKETEGAGSPRPEDSGIVPHFERKKL. Residue Ser1206 is modified to Phosphoserine.

Associates with components of the U1 and U2 U1 small nuclear ribonucleoprotein complexes. Phosphorylation regulates the subcellular localization. Phosphorylation of Ser-637 and Ser-639 in the RS (arginine/serine-rich) region promotes nuclear localization of the protein. In contrast, phosphorylation of the C-terminal disordered region promotes localization to cytoplasmic ribonucleoprotein granules.

The protein resides in the nucleus. Its subcellular location is the cytoplasm. The protein localises to the cytoplasmic ribonucleoprotein granule. Its function is as follows. RNA-binding protein that acts as a regulator of mRNA splicing of a subset of genes encoding key structural proteins involved in cardiac development, such as TTN (Titin), CACNA1C, CAMK2D or PDLIM5/ENH. Acts as a repressor of mRNA splicing: specifically binds the 5'UCUU-3' motif that is predominantly found within intronic sequences of pre-mRNAs, leading to the exclusion of specific exons in target transcripts. RBM20-mediated exon skipping is hormone-dependent and is essential for TTN isoform transition in both cardiac and skeletal muscles. RBM20-mediated exon skipping of TTN provides substrates for the formation of circular RNA (circRNAs) from the TTN transcripts. Together with RBM24, promotes the expression of short isoforms of PDLIM5/ENH in cardiomyocytes. This is RNA-binding protein 20 from Sus scrofa (Pig).